The sequence spans 268 residues: Putative hydro-lyase ABSDF2257 (268 aa).

The protein belongs to the D-glutamate cyclase family.

In Acinetobacter baumannii (strain SDF), this protein is Putative hydro-lyase ABSDF2257.